Reading from the N-terminus, the 100-residue chain is Small ribosomal subunit protein uS14c (100 aa).

It belongs to the universal ribosomal protein uS14 family. In terms of assembly, part of the 30S ribosomal subunit.

It localises to the plastid. The protein resides in the chloroplast. Binds 16S rRNA, required for the assembly of 30S particles. This chain is Small ribosomal subunit protein uS14c, found in Crucihimalaya wallichii (Rock-cress).